The sequence spans 549 residues: Arginine--tRNA ligase (549 aa).

The 'HIGH' region motif lies at alanine 132–histidine 142.

Belongs to the class-I aminoacyl-tRNA synthetase family. In terms of assembly, monomer.

Its subcellular location is the cytoplasm. The catalysed reaction is tRNA(Arg) + L-arginine + ATP = L-arginyl-tRNA(Arg) + AMP + diphosphate. This is Arginine--tRNA ligase from Renibacterium salmoninarum (strain ATCC 33209 / DSM 20767 / JCM 11484 / NBRC 15589 / NCIMB 2235).